We begin with the raw amino-acid sequence, 777 residues long: Endonuclease MutS2 (777 aa).

328–335 (GPNTGGKT) provides a ligand contact to ATP. The Smr domain maps to 702–777 (LDLRGKRYEE…GSGCTIATLG (76 aa)).

The protein belongs to the DNA mismatch repair MutS family. MutS2 subfamily. As to quaternary structure, homodimer. Binds to stalled ribosomes, contacting rRNA.

In terms of biological role, endonuclease that is involved in the suppression of homologous recombination and thus may have a key role in the control of bacterial genetic diversity. Its function is as follows. Acts as a ribosome collision sensor, splitting the ribosome into its 2 subunits. Detects stalled/collided 70S ribosomes which it binds and splits by an ATP-hydrolysis driven conformational change. Acts upstream of the ribosome quality control system (RQC), a ribosome-associated complex that mediates the extraction of incompletely synthesized nascent chains from stalled ribosomes and their subsequent degradation. Probably generates substrates for RQC. The sequence is that of Endonuclease MutS2 from Streptococcus uberis (strain ATCC BAA-854 / 0140J).